A 30-amino-acid polypeptide reads, in one-letter code: Ornithine carbamoyltransferase (30 aa).

This sequence belongs to the aspartate/ornithine carbamoyltransferase superfamily. OTCase family.

Its subcellular location is the cytoplasm. The catalysed reaction is carbamoyl phosphate + L-ornithine = L-citrulline + phosphate + H(+). The protein operates within amino-acid biosynthesis; L-arginine biosynthesis; L-arginine from L-ornithine and carbamoyl phosphate: step 1/3. Its function is as follows. Has vitronectin and fibronectin-binding activity. The chain is Ornithine carbamoyltransferase (argF) from Staphylococcus epidermidis.